Here is a 442-residue protein sequence, read N- to C-terminus: UPF0489 protein C5orf22 homolog (442 aa).

Residues 175–208 (SSAKKPKLALEDSRNTASTNCDSSSEGLEKDTAT) are disordered. The segment covering 189–200 (NTASTNCDSSSE) has biased composition (polar residues).

It belongs to the UPF0489 family.

The sequence is that of UPF0489 protein C5orf22 homolog from Pongo abelii (Sumatran orangutan).